The chain runs to 141 residues: Large ribosomal subunit protein uL11 (141 aa).

It belongs to the universal ribosomal protein uL11 family. Part of the ribosomal stalk of the 50S ribosomal subunit. Interacts with L10 and the large rRNA to form the base of the stalk. L10 forms an elongated spine to which L12 dimers bind in a sequential fashion forming a multimeric L10(L12)X complex. In terms of processing, one or more lysine residues are methylated.

Functionally, forms part of the ribosomal stalk which helps the ribosome interact with GTP-bound translation factors. This Geobacillus sp. (strain WCH70) protein is Large ribosomal subunit protein uL11.